We begin with the raw amino-acid sequence, 428 residues long: Adenylosuccinate synthetase (428 aa).

GTP-binding positions include 11–17 and 39–41; these read GDEGKGK and GHT. Asp12 functions as the Proton acceptor in the catalytic mechanism. Mg(2+) contacts are provided by Asp12 and Gly39. IMP-binding positions include 12–15, 37–40, Thr130, Arg144, Asn226, Thr241, and Arg305; these read DEGK and NAGH. His40 serves as the catalytic Proton donor. 301 to 307 lines the substrate pocket; the sequence is VTTGRKR. Residues Arg307, 333–335, and 415–417 each bind GTP; these read KLD and GTG.

The protein belongs to the adenylosuccinate synthetase family. As to quaternary structure, homodimer. The cofactor is Mg(2+).

It is found in the cytoplasm. It catalyses the reaction IMP + L-aspartate + GTP = N(6)-(1,2-dicarboxyethyl)-AMP + GDP + phosphate + 2 H(+). Its pathway is purine metabolism; AMP biosynthesis via de novo pathway; AMP from IMP: step 1/2. Its function is as follows. Plays an important role in the de novo pathway and in the salvage pathway of purine nucleotide biosynthesis. Catalyzes the first committed step in the biosynthesis of AMP from IMP. The chain is Adenylosuccinate synthetase from Komagataella phaffii (strain GS115 / ATCC 20864) (Yeast).